The following is a 141-amino-acid chain: Ribonuclease P protein component (141 aa).

2 disordered regions span residues 37-56 and 114-141; these read RTEE…VGFT and RRIT…VNGK. Over residues 114 to 124 the composition is skewed to basic and acidic residues; sequence RRITAKGERRS.

It belongs to the RnpA family. As to quaternary structure, consists of a catalytic RNA component (M1 or rnpB) and a protein subunit.

The catalysed reaction is Endonucleolytic cleavage of RNA, removing 5'-extranucleotides from tRNA precursor.. Functionally, RNaseP catalyzes the removal of the 5'-leader sequence from pre-tRNA to produce the mature 5'-terminus. It can also cleave other RNA substrates such as 4.5S RNA. The protein component plays an auxiliary but essential role in vivo by binding to the 5'-leader sequence and broadening the substrate specificity of the ribozyme. This Brucella melitensis biotype 1 (strain ATCC 23456 / CCUG 17765 / NCTC 10094 / 16M) protein is Ribonuclease P protein component.